The primary structure comprises 414 residues: Tyrosine--tRNA ligase (414 aa).

Residue Tyr-38 coordinates L-tyrosine. The 'HIGH' region signature appears at 43–52 (PTATSLHLGN). L-tyrosine-binding residues include Tyr-165 and Gln-169. Residues 228 to 232 (KFGKS) carry the 'KMSKS' region motif. Lys-231 is a binding site for ATP. Residues 349-414 (FNANQIIDLG…KKYFFMIELI (66 aa)) enclose the S4 RNA-binding domain.

This sequence belongs to the class-I aminoacyl-tRNA synthetase family. TyrS type 1 subfamily. As to quaternary structure, homodimer.

It localises to the cytoplasm. It catalyses the reaction tRNA(Tyr) + L-tyrosine + ATP = L-tyrosyl-tRNA(Tyr) + AMP + diphosphate + H(+). Functionally, catalyzes the attachment of tyrosine to tRNA(Tyr) in a two-step reaction: tyrosine is first activated by ATP to form Tyr-AMP and then transferred to the acceptor end of tRNA(Tyr). This is Tyrosine--tRNA ligase from Mesomycoplasma hyopneumoniae (strain 7448) (Mycoplasma hyopneumoniae).